The primary structure comprises 165 residues: Crossover junction endodeoxyribonuclease RuvC (165 aa).

Residues Asp-7, Glu-67, and Asp-140 contribute to the active site. Asp-7, Glu-67, and Asp-140 together coordinate Mg(2+).

The protein belongs to the RuvC family. Homodimer which binds Holliday junction (HJ) DNA. The HJ becomes 2-fold symmetrical on binding to RuvC with unstacked arms; it has a different conformation from HJ DNA in complex with RuvA. In the full resolvosome a probable DNA-RuvA(4)-RuvB(12)-RuvC(2) complex forms which resolves the HJ. Mg(2+) is required as a cofactor.

Its subcellular location is the cytoplasm. The catalysed reaction is Endonucleolytic cleavage at a junction such as a reciprocal single-stranded crossover between two homologous DNA duplexes (Holliday junction).. Functionally, the RuvA-RuvB-RuvC complex processes Holliday junction (HJ) DNA during genetic recombination and DNA repair. Endonuclease that resolves HJ intermediates. Cleaves cruciform DNA by making single-stranded nicks across the HJ at symmetrical positions within the homologous arms, yielding a 5'-phosphate and a 3'-hydroxyl group; requires a central core of homology in the junction. The consensus cleavage sequence is 5'-(A/T)TT(C/G)-3'. Cleavage occurs on the 3'-side of the TT dinucleotide at the point of strand exchange. HJ branch migration catalyzed by RuvA-RuvB allows RuvC to scan DNA until it finds its consensus sequence, where it cleaves and resolves the cruciform DNA. This is Crossover junction endodeoxyribonuclease RuvC from Caldanaerobacter subterraneus subsp. tengcongensis (strain DSM 15242 / JCM 11007 / NBRC 100824 / MB4) (Thermoanaerobacter tengcongensis).